The sequence spans 192 residues: Ribosome maturation factor RimM (192 aa).

The 77-residue stretch at 116 to 192 (PGEYYWVDLI…RIIVDWQPDY (77 aa)) folds into the PRC barrel domain.

The protein belongs to the RimM family. Binds ribosomal protein uS19.

The protein resides in the cytoplasm. An accessory protein needed during the final step in the assembly of 30S ribosomal subunit, possibly for assembly of the head region. Essential for efficient processing of 16S rRNA. May be needed both before and after RbfA during the maturation of 16S rRNA. It has affinity for free ribosomal 30S subunits but not for 70S ribosomes. The chain is Ribosome maturation factor RimM from Verminephrobacter eiseniae (strain EF01-2).